Here is a 121-residue protein sequence, read N- to C-terminus: Insulin-like peptide 01 (121 aa).

A signal peptide spans 1–24; sequence MDSFTRASLITFLILLTLTSLVFS. A propeptide spanning residues 25-45 is cleaved from the precursor; it reads NGCMMRGGCFKTSEDAHRLIM. Intrachain disulfides connect Cys-52/Cys-107, Cys-64/Cys-120, and Cys-106/Cys-111. Residues 69–97 constitute a propeptide, c peptide; the sequence is RRRKRDLRRKLGIVMDRKESHKFLRRRKR.

This sequence belongs to the insulin family.

Its subcellular location is the secreted. Insulin decreases blood glucose concentration. May have evolved to activate insulin receptors (INSR) in vertebrates. Molecular docking studies reveals unique interaction with the human insulin receptor. In vivo, insulin-like peptide injection reduces blood glucose levels in two models of zebrafish diabetes (streptozotocin- and glucose-induced). Also shorter swimming distance of zebrafish larvae, an effect which is not observed with human insulin. In Exaiptasia diaphana (Tropical sea anemone), this protein is Insulin-like peptide 01.